The chain runs to 156 residues: Small ribosomal subunit protein uS7 (156 aa).

The protein belongs to the universal ribosomal protein uS7 family. In terms of assembly, part of the 30S ribosomal subunit. Contacts proteins S9 and S11.

Its function is as follows. One of the primary rRNA binding proteins, it binds directly to 16S rRNA where it nucleates assembly of the head domain of the 30S subunit. Is located at the subunit interface close to the decoding center, probably blocks exit of the E-site tRNA. The sequence is that of Small ribosomal subunit protein uS7 from Syntrophus aciditrophicus (strain SB).